Reading from the N-terminus, the 490-residue chain is Chromosomal replication initiator protein DnaA (490 aa).

The interval 1–91 (MTMKGGVASQ…GELWAAHDAT (91 aa)) is domain I, interacts with DnaA modulators. A domain II region spans residues 91-147 (TGRRIDLKSRLEFEAAAGAYVEATPKAVAAEPIEIVLPVSTDAPTVVAPSAKSPRTQ). A domain III, AAA+ region region spans residues 148–370 (GLQERFTFET…GALNTLSARA (223 aa)). ATP contacts are provided by G192, G194, K195, and T196. The interval 371–490 (GEGLSRMTLD…LETLTRKLRG (120 aa)) is domain IV, binds dsDNA.

Belongs to the DnaA family. In terms of assembly, oligomerizes as a right-handed, spiral filament on DNA at oriC.

It localises to the cytoplasm. Plays an essential role in the initiation and regulation of chromosomal replication. ATP-DnaA binds to the origin of replication (oriC) to initiate formation of the DNA replication initiation complex once per cell cycle. Binds the DnaA box (a 9 base pair repeat at the origin) and separates the double-stranded (ds)DNA. Forms a right-handed helical filament on oriC DNA; dsDNA binds to the exterior of the filament while single-stranded (ss)DNA is stabiized in the filament's interior. The ATP-DnaA-oriC complex binds and stabilizes one strand of the AT-rich DNA unwinding element (DUE), permitting loading of DNA polymerase. After initiation quickly degrades to an ADP-DnaA complex that is not apt for DNA replication. Binds acidic phospholipids. This chain is Chromosomal replication initiator protein DnaA, found in Caulobacter vibrioides (strain ATCC 19089 / CIP 103742 / CB 15) (Caulobacter crescentus).